The following is a 512-amino-acid chain: Nuclear fusion protein FUS1 (512 aa).

A helical transmembrane segment spans residues 72–96; sequence IGLSIGLPIGIFCFGLLILLCYFYL. The interval 97–512 is hydrophilic; the sequence is KRNSVSISNP…VPGDCLQEYD (416 aa). Thr178 is subject to Phosphothreonine. Phosphoserine is present on residues Ser190 and Ser256. Phosphothreonine is present on residues Thr281 and Thr424. An SH3 domain is found at 436-512; sequence QLGKTYTVIQ…VPGDCLQEYD (77 aa).

O-glycosylated.

It is found in the membrane. In terms of biological role, required for cell fusion. Negatively regulates Sho1p signaling to ensure efficient cell fusion. Interacts with SHO1. This Saccharomyces cerevisiae (strain ATCC 204508 / S288c) (Baker's yeast) protein is Nuclear fusion protein FUS1 (FUS1).